A 283-amino-acid polypeptide reads, in one-letter code: uncharacterized protein (283 aa).

Residues 1–23 (MFAFASFAISAIFFLCSFSYVSS) form the signal peptide.

It is found in the secreted. This is an uncharacterized protein from Schizosaccharomyces pombe (strain 972 / ATCC 24843) (Fission yeast).